A 147-amino-acid chain; its full sequence is Basic phospholipase A2 beta-bungarotoxin A4 chain (147 aa).

The first 19 residues, 1-19, serve as a signal peptide directing secretion; sequence MNPAHLLVLSAVCVSLLGA. The propeptide occupies 20–27; the sequence is ANIPPHPL. Cystine bridges form between Cys54/Cys146, Cys56/Cys72, Cys71/Cys127, Cys78/Cys120, Cys88/Cys113, and Cys106/Cys118. Tyr55, Gly57, and Gly59 together coordinate Ca(2+). His75 is an active-site residue. Asp76 provides a ligand contact to Ca(2+). Residue Asp121 is part of the active site.

This sequence belongs to the phospholipase A2 family. Group I subfamily. D49 sub-subfamily. Heterodimer; disulfide-linked. The A chain has phospholipase A2 activity and the B chain shows homology with the basic protease inhibitors. It depends on Ca(2+) as a cofactor. As to expression, expressed by the venom gland.

The protein localises to the secreted. The catalysed reaction is a 1,2-diacyl-sn-glycero-3-phosphocholine + H2O = a 1-acyl-sn-glycero-3-phosphocholine + a fatty acid + H(+). In terms of biological role, snake venom phospholipase A2 (PLA2) that shows presynaptic neurotoxicity. The A chain has phospholipase activity. PLA2 catalyzes the calcium-dependent hydrolysis of the 2-acyl groups in 3-sn-phosphoglycerides. The chain is Basic phospholipase A2 beta-bungarotoxin A4 chain from Bungarus candidus (Malayan krait).